Here is a 222-residue protein sequence, read N- to C-terminus: Sugar fermentation stimulation protein homolog (222 aa).

This sequence belongs to the SfsA family.

The chain is Sugar fermentation stimulation protein homolog from Thermotoga maritima (strain ATCC 43589 / DSM 3109 / JCM 10099 / NBRC 100826 / MSB8).